A 158-amino-acid chain; its full sequence is Transcription elongation factor GreA (158 aa).

Residues 49-73 are a coiled coil; the sequence is QAAREQQGFIEGRIKEIEAKLANAQ.

This sequence belongs to the GreA/GreB family.

Functionally, necessary for efficient RNA polymerase transcription elongation past template-encoded arresting sites. The arresting sites in DNA have the property of trapping a certain fraction of elongating RNA polymerases that pass through, resulting in locked ternary complexes. Cleavage of the nascent transcript by cleavage factors such as GreA or GreB allows the resumption of elongation from the new 3'terminus. GreA releases sequences of 2 to 3 nucleotides. This is Transcription elongation factor GreA from Methylococcus capsulatus (strain ATCC 33009 / NCIMB 11132 / Bath).